We begin with the raw amino-acid sequence, 263 residues long: L-aspartate dehydrogenase (263 aa).

The NAD(+) site is built by Ala120 and Asn186. Residue His216 is part of the active site.

This sequence belongs to the L-aspartate dehydrogenase family.

The catalysed reaction is L-aspartate + NADP(+) + H2O = oxaloacetate + NH4(+) + NADPH + H(+). It carries out the reaction L-aspartate + NAD(+) + H2O = oxaloacetate + NH4(+) + NADH + H(+). The protein operates within cofactor biosynthesis; NAD(+) biosynthesis; iminoaspartate from L-aspartate (dehydrogenase route): step 1/1. Its function is as follows. Specifically catalyzes the NAD or NADP-dependent dehydrogenation of L-aspartate to iminoaspartate. This Acinetobacter baumannii (strain AB307-0294) protein is L-aspartate dehydrogenase.